The following is a 260-amino-acid chain: POLG alternative reading frame (260 aa).

2 disordered regions span residues 1-50 (MEPK…LRPR) and 108-219 (ARRG…RRGG). Low complexity-rich tracts occupy residues 36-48 (AGSSSGALGLQLR), 116-154 (GRGAPQRRAPAEARALGAASRALARRGAAPAAPLRGQPG), and 164-186 (AEPALPGGGQLAVAGPAAPEAPG). Positions 104–130 (ANLRARRGDAWRGRGAPQRRAPAEARA) are required for nucleolar localization. 2 stretches are compositionally biased toward gly residues: residues 187–199 (LGLGGGLDPVRPR) and 209–219 (RGAGPGVRRGG).

As to quaternary structure, interacts with C1QBP; the interaction results in nucleolar localization of C1QBP, probably due to prevention of C1QBP maturation and redirection from mitochondria to nucleoli. Post-translationally, undergoes proteolytic cleavage to produce a secreted C-terminal fragment.

The protein localises to the nucleus. It localises to the nucleolus. Its subcellular location is the secreted. The polypeptide is POLG alternative reading frame (Homo sapiens (Human)).